A 218-amino-acid chain; its full sequence is Mitochondrial fission factor (218 aa).

Residues 1-198 (MAEISRIQYE…ENKERAKREM (198 aa)) are Cytoplasmic-facing. Thr89 is subject to Phosphothreonine. Phosphoserine occurs at positions 129, 131, 146, and 171. The stretch at 167–198 (VDAASLRRQIIKLNRRLQLLEEENKERAKREM) forms a coiled coil. The chain crosses the membrane as a helical; Anchor for type IV membrane protein span at residues 199–216 (VMYSITVAFWLLNSWLWF). Residues 217-218 (RR) are Mitochondrial intermembrane-facing.

This sequence belongs to the Tango11 family. In terms of assembly, homodimer. Interacts with DNM1L. Interacts with C11orf65/MFI; the interaction inhibits MFF interaction with DNM1L.

It is found in the mitochondrion outer membrane. Its subcellular location is the peroxisome. It localises to the cytoplasmic vesicle. The protein resides in the secretory vesicle. The protein localises to the synaptic vesicle. Functionally, plays a role in mitochondrial and peroxisomal fission. Promotes the recruitment and association of the fission mediator dynamin-related protein 1 (DNM1L) to the mitochondrial surface. May be involved in regulation of synaptic vesicle membrane dynamics by recruitment of DNM1L to clathrin-containing vesicles. The polypeptide is Mitochondrial fission factor (MFF) (Pongo abelii (Sumatran orangutan)).